Consider the following 326-residue polypeptide: Tetraacyldisaccharide 4'-kinase (326 aa).

Residue 55-62 (TAGGNGKT) participates in ATP binding.

Belongs to the LpxK family.

It carries out the reaction a lipid A disaccharide + ATP = a lipid IVA + ADP + H(+). The protein operates within glycolipid biosynthesis; lipid IV(A) biosynthesis; lipid IV(A) from (3R)-3-hydroxytetradecanoyl-[acyl-carrier-protein] and UDP-N-acetyl-alpha-D-glucosamine: step 6/6. Its function is as follows. Transfers the gamma-phosphate of ATP to the 4'-position of a tetraacyldisaccharide 1-phosphate intermediate (termed DS-1-P) to form tetraacyldisaccharide 1,4'-bis-phosphate (lipid IVA). This Klebsiella pneumoniae subsp. pneumoniae (strain ATCC 700721 / MGH 78578) protein is Tetraacyldisaccharide 4'-kinase.